The primary structure comprises 761 residues: 5-methyltetrahydropteroyltriglutamate--homocysteine methyltransferase (761 aa).

Residues 16–19 and K116 contribute to the 5-methyltetrahydropteroyltri-L-glutamate site; that span reads RELK. L-homocysteine is bound by residues 435-437 and E488; that span reads IGS. L-methionine contacts are provided by residues 435–437 and E488; that span reads IGS. Residues 519–520 and W565 contribute to the 5-methyltetrahydropteroyltri-L-glutamate site; that span reads RC. Residue D603 coordinates L-homocysteine. D603 contacts L-methionine. Position 609 (E609) interacts with 5-methyltetrahydropteroyltri-L-glutamate. The Zn(2+) site is built by H645, C647, and E669. The Proton donor role is filled by H698. Position 730 (C730) interacts with Zn(2+).

This sequence belongs to the vitamin-B12 independent methionine synthase family. It depends on Zn(2+) as a cofactor.

The enzyme catalyses 5-methyltetrahydropteroyltri-L-glutamate + L-homocysteine = tetrahydropteroyltri-L-glutamate + L-methionine. It functions in the pathway amino-acid biosynthesis; L-methionine biosynthesis via de novo pathway; L-methionine from L-homocysteine (MetE route): step 1/1. Its function is as follows. Catalyzes the transfer of a methyl group from 5-methyltetrahydrofolate to homocysteine resulting in methionine formation. This is 5-methyltetrahydropteroyltriglutamate--homocysteine methyltransferase from Hahella chejuensis (strain KCTC 2396).